The primary structure comprises 1249 residues: AMB antimetabolite synthetase AmbB (1249 aa).

The interval 245 to 633 (FEAQARRTPQ…LGRLDDQVKF (389 aa)) is adenylation. Residues 716 to 735 (IDRKALPRPQATGAEPQALP) are disordered. The region spanning 734-809 (LPSDPLEQAL…ALLELLRQAA (76 aa)) is the Carrier domain. The residue at position 768 (Ser-768) is an O-(pantetheine 4'-phosphoryl)serine. The tract at residues 823-1150 (GLSLAERRLW…CVTQALRQRG (328 aa)) is condensation.

The protein belongs to the NRP synthetase family. Requires pantetheine 4'-phosphate as cofactor.

The enzyme catalyses holo-[peptidyl-carrier protein] + L-alanine + ATP = L-alanyl-[peptidyl-carrier protein] + AMP + diphosphate. Its function is as follows. Involved in the biosynthesis of the antimetabolite L-2-amino-4-methoxy-trans-3-butenoic acid (AMB), a non-proteinogenic amino acid which is toxic for prokaryotes and eukaryotes. Adenylates L-alanine and loads it onto its peptidyl carrier domain via a thioester linkage to the phosphopanthetheine moiety. In addition, loads activated L-Ala in trans onto the second carrier domain of AmbE. Can also activate L-Ser, Gly and D-Ala, albeit to a lower extent. The condensation domain of AmbB probably condenses the activated L-Ala and the L-Glu loaded on AmbE to form a L-Glu-L-Ala dipeptide at the first carrier domain of AmbE. This Pseudomonas aeruginosa (strain ATCC 15692 / DSM 22644 / CIP 104116 / JCM 14847 / LMG 12228 / 1C / PRS 101 / PAO1) protein is AMB antimetabolite synthetase AmbB.